Consider the following 327-residue polypeptide: Phosphoenolpyruvate transferase (327 aa).

Asp-59 contributes to the 7,8-didemethyl-8-hydroxy-5-deazariboflavin binding site.

Belongs to the CofD family. In terms of assembly, homodimer. Mg(2+) serves as cofactor.

The catalysed reaction is enolpyruvoyl-2-diphospho-5'-guanosine + 7,8-didemethyl-8-hydroxy-5-deazariboflavin = dehydro coenzyme F420-0 + GMP + H(+). It functions in the pathway cofactor biosynthesis; coenzyme F420 biosynthesis. Catalyzes the transfer of the phosphoenolpyruvate moiety from enoylpyruvoyl-2-diphospho-5'-guanosine (EPPG) to 7,8-didemethyl-8-hydroxy-5-deazariboflavin (FO) with the formation of dehydro coenzyme F420-0 and GMP. In Mycolicibacterium smegmatis (strain ATCC 700084 / mc(2)155) (Mycobacterium smegmatis), this protein is Phosphoenolpyruvate transferase.